Consider the following 970-residue polypeptide: Villin-3 (970 aa).

Gelsolin-like repeat units lie at residues 31–111 (AVPV…ERFL), 151–219 (TVHV…EDGK), 273–339 (VLTR…TVIF), 416–484 (KFYS…PAEF), 536–576 (AIQV…QELA), and 643–714 (NFTQ…PQFF). Positions 741-908 (DGVKPKLDKP…EGQPENEEGL (168 aa)) are disordered. A compositionally biased stretch (polar residues) spans 755-778 (TTSSSHTGRSSVPEKSQRSRSMSF). Positions 833 to 842 (AASIAAISAS) are enriched in low complexity. The segment covering 878–893 (KDSTPSKDSPTVTPTI) has biased composition (polar residues). In terms of domain architecture, HP spans 905–970 (EEGLPVYPYE…NRLKIALQLF (66 aa)).

This sequence belongs to the villin/gelsolin family. In terms of tissue distribution, expressed in roots, young leaves, and inflorescences, mostly in the vasculature of roots, leaves, and filaments of the anthers and in epidermal cells of the elongation zone and root hairs. Also detected in guard cells.

The protein localises to the cytoplasm. The protein resides in the cytoskeleton. Its function is as follows. Ca(2+)-regulated actin-binding protein. Binds actin microfilaments (MFs). Involved in actin filament bundling, severing and capping. Caps the barbed end of actin filaments and is able to sever them in a calcium-dependent manner. MF severing is promoted by VLN1. This is Villin-3 from Oryza sativa subsp. japonica (Rice).